The chain runs to 102 residues: UPF0058 protein MTH_224 (102 aa).

It belongs to the UPF0058 family.

The sequence is that of UPF0058 protein MTH_224 from Methanothermobacter thermautotrophicus (strain ATCC 29096 / DSM 1053 / JCM 10044 / NBRC 100330 / Delta H) (Methanobacterium thermoautotrophicum).